The following is a 1057-amino-acid chain: Carbamoyl phosphate synthase large chain (1057 aa).

Residues 1–401 (MPKRNDIKTI…SLLKAIRSLE (401 aa)) form a carboxyphosphate synthetic domain region. 12 residues coordinate ATP: R129, R169, G175, G176, K208, I210, E215, G241, I242, H243, Q284, and E298. The ATP-grasp 1 domain maps to 133–327 (RTLMNDLNVP…IAKLAAKIAV (195 aa)). Q284, E298, and N300 together coordinate Mg(2+). Residues Q284, E298, and N300 each coordinate Mn(2+). Residues 402-546 (YGVHHLGLPN…YGTYETENES (145 aa)) are oligomerization domain. Positions 547–929 (IVTDKEKILV…ALFKGLTGSG (383 aa)) are carbamoyl phosphate synthetic domain. Positions 671–861 (EALLRKINVP…MAQLAMRAII (191 aa)) constitute an ATP-grasp 2 domain. Residues R707, R746, L748, E752, G777, V778, H779, S780, Q820, and E832 each contribute to the ATP site. Residues Q820, E832, and N834 each contribute to the Mg(2+) site. Positions 820, 832, and 834 each coordinate Mn(2+). One can recognise an MGS-like domain in the interval 930–1057 (VEVKDHGTVL…ESMTFTMRQM (128 aa)). Residues 930 to 1057 (VEVKDHGTVL…ESMTFTMRQM (128 aa)) form an allosteric domain region.

The protein belongs to the CarB family. As to quaternary structure, composed of two chains; the small (or glutamine) chain promotes the hydrolysis of glutamine to ammonia, which is used by the large (or ammonia) chain to synthesize carbamoyl phosphate. Tetramer of heterodimers (alpha,beta)4. Mg(2+) is required as a cofactor. Requires Mn(2+) as cofactor.

The catalysed reaction is hydrogencarbonate + L-glutamine + 2 ATP + H2O = carbamoyl phosphate + L-glutamate + 2 ADP + phosphate + 2 H(+). It catalyses the reaction hydrogencarbonate + NH4(+) + 2 ATP = carbamoyl phosphate + 2 ADP + phosphate + 2 H(+). It participates in amino-acid biosynthesis; L-arginine biosynthesis; carbamoyl phosphate from bicarbonate: step 1/1. Its pathway is pyrimidine metabolism; UMP biosynthesis via de novo pathway; (S)-dihydroorotate from bicarbonate: step 1/3. Its function is as follows. Large subunit of the glutamine-dependent carbamoyl phosphate synthetase (CPSase). CPSase catalyzes the formation of carbamoyl phosphate from the ammonia moiety of glutamine, carbonate, and phosphate donated by ATP, constituting the first step of 2 biosynthetic pathways, one leading to arginine and/or urea and the other to pyrimidine nucleotides. The large subunit (synthetase) binds the substrates ammonia (free or transferred from glutamine from the small subunit), hydrogencarbonate and ATP and carries out an ATP-coupled ligase reaction, activating hydrogencarbonate by forming carboxy phosphate which reacts with ammonia to form carbamoyl phosphate. The sequence is that of Carbamoyl phosphate synthase large chain from Staphylococcus aureus (strain Mu3 / ATCC 700698).